The primary structure comprises 440 residues: Xaa-Pro dipeptidase (440 aa).

Asp241, Asp252, His333, Glu378, and Glu417 together coordinate Mn(2+).

It belongs to the peptidase M24B family. Bacterial-type prolidase subfamily. It depends on Mn(2+) as a cofactor.

The enzyme catalyses Xaa-L-Pro dipeptide + H2O = an L-alpha-amino acid + L-proline. Splits dipeptides with a prolyl residue in the C-terminal position. This chain is Xaa-Pro dipeptidase, found in Glaesserella parasuis serovar 5 (strain SH0165) (Haemophilus parasuis).